Consider the following 361-residue polypeptide: Probable lipid desaturase ADS3.2, chloroplastic (361 aa).

A chloroplast-targeting transit peptide spans 1–57 (MMSLSTTLKPLSHFSPFVKRHNPKTNNTLFTLDTHNFTNSFWSKRGGSVSHRKHTVV). Transmembrane regions (helical) follow at residues 99–118 (LVIF…YFSW) and 122–139 (WVFP…TLSY). Residues 140–145 (HRNLSH) carry the Histidine box-1 motif. A Histidine box-2 motif is present at residues 177 to 181 (HRYHH). Residues 246-266 (FLFYFCGGMPLLVWGIGITIA) form a helical membrane-spanning segment. The Histidine box-3 motif lies at 309–313 (HNNHH).

The protein belongs to the fatty acid desaturase type 1 family. Fe(2+) serves as cofactor.

It is found in the plastid. The protein resides in the chloroplast membrane. Its pathway is lipid metabolism; polyunsaturated fatty acid biosynthesis. This is Probable lipid desaturase ADS3.2, chloroplastic from Arabidopsis thaliana (Mouse-ear cress).